Consider the following 157-residue polypeptide: MSRRRRAEKRQVLPDPKFGDLVVTKFMNYVMYEGKKAVAENIIYGAFDILEAKRKDQGPLETFHSALDNVAPAIEVRSRRVGGATYQVPVEVRPDRRRALAIRWLVTAARKRGENTMTEKLAGELLDASNNRGTAVKKREDTHKMAEANRAFSHYRW.

The protein belongs to the universal ribosomal protein uS7 family. As to quaternary structure, part of the 30S ribosomal subunit. Contacts proteins S9 and S11.

In terms of biological role, one of the primary rRNA binding proteins, it binds directly to 16S rRNA where it nucleates assembly of the head domain of the 30S subunit. Is located at the subunit interface close to the decoding center, probably blocks exit of the E-site tRNA. The chain is Small ribosomal subunit protein uS7 from Caulobacter vibrioides (strain ATCC 19089 / CIP 103742 / CB 15) (Caulobacter crescentus).